We begin with the raw amino-acid sequence, 414 residues long: Lysocardiolipin acyltransferase 1 (414 aa).

Helical transmembrane passes span 47–67 (FILTLFWGSFFGSIFMLSPFL) and 86–106 (ATWLTLPVALLETMFGVKVII). The HXXXXD motif signature appears at 123-128 (HRTRMD). Lys-221 carries the N6-acetyllysine modification. 2 consecutive transmembrane segments (helical) span residues 340–360 (LRVLVVKLLSILYWTLFSPAM) and 362–382 (LLIYLYSLVKWYFIITIVIFV).

The protein belongs to the 1-acyl-sn-glycerol-3-phosphate acyltransferase family. As to expression, expressed at higher level in heart, kidney and pancreas than in brain, spleen, liver, lung, small intestine and placenta.

Its subcellular location is the endoplasmic reticulum membrane. It carries out the reaction a 1-acyl-sn-glycero-3-phosphate + an acyl-CoA = a 1,2-diacyl-sn-glycero-3-phosphate + CoA. It catalyses the reaction a 1-acyl-sn-glycero-3-phospho-(1D-myo-inositol) + an acyl-CoA = a 1,2-diacyl-sn-glycero-3-phospho-(1D-myo-inositol) + CoA. The enzyme catalyses 1-acyl-sn-glycero-3-phospho-(1'-sn-glycerol) + an acyl-CoA = a 1,2-diacyl-sn-glycero-3-phospho-(1'-sn-glycerol) + CoA. The catalysed reaction is 1-hexadecanoyl-sn-glycero-3-phosphate + (9Z)-octadecenoyl-CoA = 1-hexadecanoyl-2-(9Z-octadecenoyl)-sn-glycero-3-phosphate + CoA. It carries out the reaction 1-(9Z-octadecenoyl)-sn-glycero-3-phosphate + (9Z)-octadecenoyl-CoA = 1,2-di-(9Z-octadecenoyl)-sn-glycero-3-phosphate + CoA. It catalyses the reaction 1-(9Z,12Z)-octadecadienoyl-sn-glycero-3-phosphate + (9Z)-octadecenoyl-CoA = 1-(9Z,12Z)-octadecadienoyl-2-(9Z)-octadecenoyl-sn-glycero-3-phosphate + CoA. The enzyme catalyses 1-(9Z,12Z,15Z)-octadecatrienoyl-sn-glycero-3-phosphate + (9Z)-octadecenoyl-CoA = 1-(9Z,12Z,15Z)-octadecatrienoyl-2-(9Z)-octadecenoyl-sn-glycero-3-phosphate + CoA. The catalysed reaction is 1-(9Z-octadecenoyl)-sn-glycero-3-phosphate + hexadecanoyl-CoA = 1-(9Z)-octadecenoyl-2-hexadecanoyl-sn-glycero-3-phosphate + CoA. It carries out the reaction 1-(9Z-octadecenoyl)-sn-glycero-3-phosphate + octadecanoyl-CoA = 1-(9Z-octadecenoyl)-2-octadecanoyl-sn-glycero-3-phosphate + CoA. It catalyses the reaction 1-acyl-sn-glycero-3-phospho-(1'-sn-glycerol) + (9Z)-octadecenoyl-CoA = 1-acyl-2-(9Z-octadecenoyl)-sn-glycero-3-phospho-(1'-sn-glycerol) + CoA. The enzyme catalyses a 1-acyl-sn-glycero-3-phospho-(1D-myo-inositol) + (9Z)-octadecenoyl-CoA = a 1-acyl-2-(9Z-octadecenoyl)-sn-glycero-3-phospho-(1D-myo-inositol) + CoA. The catalysed reaction is 1-hexadecanoyl-sn-glycero-3-phospho-(1D-myo-inositol) + hexadecanoyl-CoA = 1,2-dihexadecanoyl-sn-glycero-3-phospho-(1D-myo-inositol) + CoA. It carries out the reaction 1-hexadecanoyl-sn-glycero-3-phospho-(1D-myo-inositol) + octadecanoyl-CoA = 1-hexadecanoyl-2-octadecanoyl-sn-glycero-3-phospho-(1D-myo-inositol) + CoA. It catalyses the reaction 1-hexadecanoyl-sn-glycero-3-phospho-(1D-myo-inositol) + (9Z)-octadecenoyl-CoA = 1-hexadecanoyl-2-(9Z-octadecenoyl)-sn-glycero-3-phospho-(1D-myo-inositol) + CoA. The enzyme catalyses 1-hexadecanoyl-sn-glycero-3-phospho-(1D-myo-inositol) + (9Z,12Z)-octadecadienoyl-CoA = 1-hexadecanoyl-2-(9Z,12Z-octadecadienoyl)-sn-glycero-3-phospho-(1D-myo-inositol) + CoA. The catalysed reaction is 1-hexadecanoyl-sn-glycero-3-phospho-(1D-myo-inositol) + (5Z,8Z,11Z,14Z)-eicosatetraenoyl-CoA = 1-hexadecanoyl-2-(5Z,8Z,11Z,14Z-eicosatetraenoyl)-sn-glycero-3-phospho-D-myo-inositol + CoA. It carries out the reaction 1-hexadecanoyl-sn-glycero-3-phospho-(1'-sn-glycerol) + hexadecanoyl-CoA = 1,2-dihexadecanoyl-sn-glycero-3-phospho-(1'-sn-glycerol) + CoA. It catalyses the reaction 1-hexadecanoyl-sn-glycero-3-phospho-(1'-sn-glycerol) + octadecanoyl-CoA = 1-hexadecanoyl-2-octadecanoyl-sn-glycero-3-phospho-(1'-sn-glycerol) + CoA. The enzyme catalyses 1-hexadecanoyl-sn-glycero-3-phospho-(1'-sn-glycerol) + (9Z)-octadecenoyl-CoA = 1-hexadecanoyl-2-(9Z-octadecenoyl)-sn-glycero-3-phospho-(1'-sn-glycerol) + CoA. The catalysed reaction is 1-hexadecanoyl-sn-glycero-3-phospho-(1'-sn-glycerol) + (9Z,12Z)-octadecadienoyl-CoA = 1-hexadecanoyl-2-(9Z,12Z-octadecadienoyl)-sn-glycero-3-phospho-(1'-sn-glycerol) + CoA. It carries out the reaction 1-tetradecanoyl-sn-glycero-3-phospho-(1'-sn-glycerol) + (9Z)-octadecenoyl-CoA = 1-tetradecanoyl-2-(9Z-octadecenoyl)-sn-glycero-3-phospho-(1'-sn-glycerol) + CoA. It catalyses the reaction 1-octadecanoyl-sn-glycero-3-phospho-(1'-sn-glycerol) + (9Z)-octadecenoyl-CoA = 1-octadecanoyl-2-(9Z-octadecenoyl)-sn-glycero-3-phospho-(1'-sn-glycerol) + CoA. The enzyme catalyses 1-(9Z-octadecenoyl)-sn-glycero-3-phospho-(1'-sn-glycerol) + (9Z)-octadecenoyl-CoA = 1,2-di-(9Z-octadecenoyl)-sn-glycero-3-phospho-(1'-sn-glycerol) + CoA. The catalysed reaction is 1-hexadecanoyl-sn-glycero-3-phospho-(1D-myo-inositol) + dodecanoyl-CoA = 1-hexadecanoyl-2-dodecanoyl-sn-glycero-3-phospho-(1D-myo-inositol) + CoA. It carries out the reaction 1',3'-bis-[1-acyl-sn-glycero-3-phospho]-glycerol + (9Z)-octadecenoyl-CoA = 1'-[1-acyl-2-(9Z)-octadecenoyl-sn-glycero-3-phospho],3'-[1-acyl,2-hydroxy-sn-glycero-3-phospho]-glycerol + CoA. It catalyses the reaction 1'-[1,2-diacyl-sn-glycero-3-phospho],3'-[1-acyl-sn-glycero-3-phospho]-glycerol + (9Z)-octadecenoyl-CoA = 1'-[1,2-diacyl-sn-glycero-3-phospho],3'-[1-acyl,2-(9Z)-octadecenoyl-sn-glycero-3-phospho]-glycerol + CoA. The enzyme catalyses 1'-[1,2-diacyl-sn-glycero-3-phospho],3'-[1-acyl-sn-glycero-3-phospho]-glycerol + (9Z,12Z)-octadecadienoyl-CoA = 1'-[1,2-diacyl-sn-glycero-3-phospho],3'-[1-acyl,2-(9Z,12Z)-octadecadienoyl-sn-glycero-3-phospho]-glycerol + CoA. The catalysed reaction is 1'-[1,2-diacyl-sn-glycero-3-phospho],3'-[1-acyl-sn-glycero-3-phospho]-glycerol + dodecanoyl-CoA = 1'-[1,2-diacyl-sn-glycero-3-phospho],3'-[1-acyl,2-dodecanoyl-sn-glycero-3-phospho]-glycerol + CoA. It carries out the reaction 1',3'-bis-[1-acyl-sn-glycero-3-phospho]-glycerol + dodecanoyl-CoA = 1'-[1-acyl-2-dodecanoyl-sn-glycero-3-phospho],3'-[1-acyl,2-hydroxy-sn-glycero-3-phospho]-glycerol + CoA. It catalyses the reaction a 1-acyl-sn-glycero-3-phosphate + (9Z)-octadecenoyl-CoA = a 1-acyl-2-(9Z-octadecenoyl)-sn-glycero-3-phosphate + CoA. The enzyme catalyses 1',3'-bis-[1-acyl-sn-glycero-3-phospho]-glycerol + (9Z,12Z)-octadecadienoyl-CoA = 1'-[1-acyl-2-(9Z,12Z)-octadecadienoyl-sn-glycero-3-phospho],3'-[1-acyl,2-hydroxy-sn-glycero-3-phospho]-glycerol + CoA. The catalysed reaction is 1',3'-bis-[1-acyl-sn-glycero-3-phospho]-glycerol + hexadecanoyl-CoA = 1'-[1-acyl-2-hexadecanoyl-sn-glycero-3-phospho],3'-[1-acyl,2-hydroxy-sn-glycero-3-phospho]-glycerol + CoA. It carries out the reaction 1',3'-bis-[1-acyl-sn-glycero-3-phospho]-glycerol + octadecanoyl-CoA = 1'-[1-acyl-2-octadecanoyl-sn-glycero-3-phospho],3'-[1-acyl,2-hydroxy-sn-glycero-3-phospho]-glycerol + CoA. It catalyses the reaction 1'-[1,2-diacyl-sn-glycero-3-phospho],3'-[1-acyl-sn-glycero-3-phospho]-glycerol + octanoyl-CoA = 1'-[1,2-diacyl-sn-glycero-3-phospho],3'-[1-acyl,2-octanoyl-sn-glycero-3-phospho]-glycerol + CoA. The enzyme catalyses 1',3'-bis-[1-acyl-sn-glycero-3-phospho]-glycerol + octanoyl-CoA = 1'-[1-acyl-2-octanoyl-sn-glycero-3-phospho],3'-[1-acyl,2-hydroxy-sn-glycero-3-phospho]-glycerol + CoA. The catalysed reaction is 1'-[1,2-diacyl-sn-glycero-3-phospho],3'-[1-acyl-sn-glycero-3-phospho]-glycerol + hexadecanoyl-CoA = 1'-[1,2-diacyl-sn-glycero-3-phospho],3'-[1-acyl,2-hexadecanoyl-sn-glycero-3-phospho]-glycerol + CoA. It carries out the reaction 1'-[1,2-diacyl-sn-glycero-3-phospho],3'-[1-acyl-sn-glycero-3-phospho]-glycerol + (5Z,8Z,11Z,14Z)-eicosatetraenoyl-CoA = 1'-[1,2-diacyl-sn-glycero-3-phospho],3'-[1-acyl,2-(5Z,8Z,11Z,14Z)-eicosatetraenoyl-sn-glycero-3-phospho]-glycerol + CoA. It catalyses the reaction 1',3'-bis-[1-acyl-sn-glycero-3-phospho]-glycerol + (5Z,8Z,11Z,14Z)-eicosatetraenoyl-CoA = 1'-[1-acyl-2-(5Z,8Z,11Z,14Z)-eicosatetraenoyl-sn-glycero-3-phospho],3'-[1-acyl,2-hydroxy-sn-glycero-3-phospho]-glycerol + CoA. The enzyme catalyses a 1-acyl-sn-glycero-3-phospho-(1D-myo-inositol) + octadecanoyl-CoA = a 1-acyl-2-octadecanoyl-sn-glycero-3-phospho-(1D-myo-inositol) + CoA. The catalysed reaction is a 2-acyl-sn-glycero-3-phospho-D-myo-inositol + octadecanoyl-CoA = 1-octadecanoyl-2-acyl-sn-glycero-3-phospho-1D-myo-inositol + CoA. It functions in the pathway phospholipid metabolism; CDP-diacylglycerol biosynthesis; CDP-diacylglycerol from sn-glycerol 3-phosphate: step 2/3. Functionally, exhibits acyl-CoA:lysocardiolipin acyltransferase (ALCAT) activity; catalyzes the reacylation of lyso-cardiolipin to cardiolipin (CL), a key step in CL remodeling. Recognizes both monolysocardiolipin and dilysocardiolipin as substrates with a preference for linoleoyl-CoA and oleoyl-CoA as acyl donors. Also exhibits 1-acyl-sn-glycerol-3-phosphate acyltransferase activity (AGPAT) activity; converts 1-acyl-sn-glycerol-3- phosphate (lysophosphatidic acid or LPA) into 1,2-diacyl-sn-glycerol-3- phosphate (phosphatidic acid or PA) by incorporating an acyl moiety at the sn-2 position of the glycerol backbone. Possesses both lysophosphatidylinositol acyltransferase (LPIAT) and lysophosphatidylglycerol acyltransferase (LPGAT) activities. Required for establishment of the hematopoietic and endothelial lineages. The polypeptide is Lysocardiolipin acyltransferase 1 (LCLAT1) (Homo sapiens (Human)).